Reading from the N-terminus, the 188-residue chain is RxLR effector protein Avh241 (188 aa).

The first 16 residues, 1-16, serve as a signal peptide directing secretion; the sequence is MRQYCLLLIVLALAAA. The RxLR-dEER motif lies at 43 to 58; it reads RLLRSEPQDEDTFEDR. A Host plasma membrane localization motif motif is present at residues 73-78; it reads GAAKAK.

This sequence belongs to the RxLR effector family.

It is found in the secreted. Its subcellular location is the host cell membrane. Effector that triggers cell death in a variety of plant species (including tobacco, tomato and soybean), regardless of the Rps genes present. Avh241 interacts with the plant immune system via at least two different mechanisms, one recognized by plants dependent on subcellular localization and one promoting infection independent on membrane localization. The cell death triggered by Avh241 in N.benthamiana requires the two host mitogen-activated protein kinases, MEK2 and WIPK. The polypeptide is RxLR effector protein Avh241 (Phytophthora sojae (strain P6497) (Soybean stem and root rot agent)).